A 196-amino-acid polypeptide reads, in one-letter code: dTTP/UTP pyrophosphatase (196 aa).

Asp-78 serves as the catalytic Proton acceptor.

This sequence belongs to the Maf family. YhdE subfamily. The cofactor is a divalent metal cation.

It localises to the cytoplasm. The catalysed reaction is dTTP + H2O = dTMP + diphosphate + H(+). The enzyme catalyses UTP + H2O = UMP + diphosphate + H(+). Nucleoside triphosphate pyrophosphatase that hydrolyzes dTTP and UTP. May have a dual role in cell division arrest and in preventing the incorporation of modified nucleotides into cellular nucleic acids. In Photobacterium profundum (strain SS9), this protein is dTTP/UTP pyrophosphatase.